A 569-amino-acid chain; its full sequence is Urease subunit alpha (569 aa).

The Urease domain occupies 131 to 569; the sequence is GGIDAHIHFI…VPMAQRYFLF (439 aa). 3 residues coordinate Ni(2+): His-136, His-138, and Lys-219. Position 219 is an N6-carboxylysine (Lys-219). His-221 lines the substrate pocket. Ni(2+)-binding residues include His-248 and His-274. His-322 functions as the Proton donor in the catalytic mechanism. Asp-362 contributes to the Ni(2+) binding site.

This sequence belongs to the metallo-dependent hydrolases superfamily. Urease alpha subunit family. Heterotrimer of UreA (gamma), UreB (beta) and UreC (alpha) subunits. Three heterotrimers associate to form the active enzyme. Requires Ni cation as cofactor. Post-translationally, carboxylation allows a single lysine to coordinate two nickel ions.

It localises to the cytoplasm. It carries out the reaction urea + 2 H2O + H(+) = hydrogencarbonate + 2 NH4(+). The protein operates within nitrogen metabolism; urea degradation; CO(2) and NH(3) from urea (urease route): step 1/1. The protein is Urease subunit alpha of Bacillus sp. (strain TB-90).